Here is a 1059-residue protein sequence, read N- to C-terminus: Carbamoyl phosphate synthase large chain (1059 aa).

Positions 1 to 401 are carboxyphosphate synthetic domain; it reads MPKRTDIKKI…SLLKACRSLE (401 aa). ATP contacts are provided by R129, R169, G175, G176, R208, I210, E215, G241, I242, H243, Q284, and E298. Residues 133 to 327 form the ATP-grasp 1 domain; sequence KQLMEDLEQP…IAKLAAKIAV (195 aa). Mg(2+) is bound by residues Q284, E298, and N300. 3 residues coordinate Mn(2+): Q284, E298, and N300. Residues 402–546 form an oligomerization domain region; it reads IGVYHNEMPE…YSTYEWENES (145 aa). Residues 547 to 929 form a carbamoyl phosphate synthetic domain region; the sequence is IKSEKESVIV…ALYKAFEASY (383 aa). The ATP-grasp 2 domain maps to 671 to 861; it reads EQALKDLNIP…MAQIATKLIL (191 aa). Residues R707, S746, L748, E752, G777, V778, H779, S780, Q820, and E832 each contribute to the ATP site. Residues Q820, E832, and N834 each contribute to the Mg(2+) site. Residues Q820, E832, and N834 each coordinate Mn(2+). The MGS-like domain occupies 930 to 1059; sequence FHLPAFGNVI…ESRGFITQAI (130 aa). An allosteric domain region spans residues 930 to 1059; sequence FHLPAFGNVI…ESRGFITQAI (130 aa).

This sequence belongs to the CarB family. As to quaternary structure, composed of two chains; the small (or glutamine) chain promotes the hydrolysis of glutamine to ammonia, which is used by the large (or ammonia) chain to synthesize carbamoyl phosphate. Tetramer of heterodimers (alpha,beta)4. Requires Mg(2+) as cofactor. It depends on Mn(2+) as a cofactor.

The enzyme catalyses hydrogencarbonate + L-glutamine + 2 ATP + H2O = carbamoyl phosphate + L-glutamate + 2 ADP + phosphate + 2 H(+). It catalyses the reaction hydrogencarbonate + NH4(+) + 2 ATP = carbamoyl phosphate + 2 ADP + phosphate + 2 H(+). Its pathway is amino-acid biosynthesis; L-arginine biosynthesis; carbamoyl phosphate from bicarbonate: step 1/1. The protein operates within pyrimidine metabolism; UMP biosynthesis via de novo pathway; (S)-dihydroorotate from bicarbonate: step 1/3. In terms of biological role, large subunit of the glutamine-dependent carbamoyl phosphate synthetase (CPSase). CPSase catalyzes the formation of carbamoyl phosphate from the ammonia moiety of glutamine, carbonate, and phosphate donated by ATP, constituting the first step of 2 biosynthetic pathways, one leading to arginine and/or urea and the other to pyrimidine nucleotides. The large subunit (synthetase) binds the substrates ammonia (free or transferred from glutamine from the small subunit), hydrogencarbonate and ATP and carries out an ATP-coupled ligase reaction, activating hydrogencarbonate by forming carboxy phosphate which reacts with ammonia to form carbamoyl phosphate. The chain is Carbamoyl phosphate synthase large chain from Streptococcus mutans serotype c (strain ATCC 700610 / UA159).